We begin with the raw amino-acid sequence, 348 residues long: Dihydroorotase (348 aa).

Zn(2+)-binding residues include histidine 14 and histidine 16. Residues 16 to 18 (HLR) and asparagine 42 each bind substrate. The Zn(2+) site is built by lysine 100, histidine 137, and histidine 175. Lysine 100 carries the post-translational modification N6-carboxylysine. Substrate is bound at residue histidine 137. Leucine 220 serves as a coordination point for substrate. Zn(2+) is bound at residue aspartate 248. The active site involves aspartate 248. 2 residues coordinate substrate: histidine 252 and alanine 264.

The protein belongs to the metallo-dependent hydrolases superfamily. DHOase family. Class II DHOase subfamily. In terms of assembly, homodimer. Zn(2+) serves as cofactor.

It catalyses the reaction (S)-dihydroorotate + H2O = N-carbamoyl-L-aspartate + H(+). The protein operates within pyrimidine metabolism; UMP biosynthesis via de novo pathway; (S)-dihydroorotate from bicarbonate: step 3/3. Catalyzes the reversible cyclization of carbamoyl aspartate to dihydroorotate. This Pseudomonas putida (strain ATCC 47054 / DSM 6125 / CFBP 8728 / NCIMB 11950 / KT2440) protein is Dihydroorotase.